The chain runs to 317 residues: Methionyl-tRNA formyltransferase (317 aa).

117-120 (SLLP) is a binding site for (6S)-5,6,7,8-tetrahydrofolate.

The protein belongs to the Fmt family.

It catalyses the reaction L-methionyl-tRNA(fMet) + (6R)-10-formyltetrahydrofolate = N-formyl-L-methionyl-tRNA(fMet) + (6S)-5,6,7,8-tetrahydrofolate + H(+). Its function is as follows. Attaches a formyl group to the free amino group of methionyl-tRNA(fMet). The formyl group appears to play a dual role in the initiator identity of N-formylmethionyl-tRNA by promoting its recognition by IF2 and preventing the misappropriation of this tRNA by the elongation apparatus. This Herminiimonas arsenicoxydans protein is Methionyl-tRNA formyltransferase.